A 238-amino-acid polypeptide reads, in one-letter code: Zinc import ATP-binding protein ZnuC (238 aa).

The 216-residue stretch at 5-220 (VKLKNVCVNL…LEFISIFGLK (216 aa)) folds into the ABC transporter domain. An ATP-binding site is contributed by 37-44 (GPNGAGKS).

This sequence belongs to the ABC transporter superfamily. Zinc importer (TC 3.A.1.15.5) family. In terms of assembly, the complex is composed of two ATP-binding proteins (ZnuC), two transmembrane proteins (ZnuB) and a solute-binding protein (ZnuA).

Its subcellular location is the cell inner membrane. It carries out the reaction Zn(2+)(out) + ATP(in) + H2O(in) = Zn(2+)(in) + ADP(in) + phosphate(in) + H(+)(in). Functionally, part of the ABC transporter complex ZnuABC involved in zinc import. Responsible for energy coupling to the transport system. The chain is Zinc import ATP-binding protein ZnuC from Buchnera aphidicola subsp. Acyrthosiphon pisum (strain APS) (Acyrthosiphon pisum symbiotic bacterium).